The primary structure comprises 492 residues: MTLWINGDWITGQGERRRKTNPVSAEILWQGNDANAAQVAEACQVARAAFPRWARQPFAARQAIVEKFAALLEAHKAELTEVIARETGKPRWEAATEVTAMINKIAISIKAYHARTGEQKSELVDGAATLRHRPHGVLAVFGPYNFPGHLPNGHIVPALLAGNTLIFKPSELTPWTGETVIKLWERAGLPAGVLNLVQGGRETGQALSSLDDLDGLLFTGSASTGYQLHRQLSGQPEKILALEMGGNNPLIIEDVANTDAAVHLTLQSAFITAGQRCTCARRLLVKQGAQGDAFLARLVDVAGRLQPGRWDDDPQPFIGGLISAQAAQHVMEAWRQREALGGRTLLAPRKVKEGTSLLTPGIIELTGVADVPDEEVFGPLLNVWRYAHFDEAIRLANNTRFGLSCGLVSTDRAQFEQLLLEARAGIVNWNKPLTGAASTAPFGGIGASGNHRPSAWYAADYCAWPMASLESPELTLPATLSPGLDFSRREAV.

NAD(+) is bound at residue 220–225 (GSASTG). Residues Glu-243 and Cys-277 contribute to the active site.

It belongs to the aldehyde dehydrogenase family. AstD subfamily.

The catalysed reaction is N-succinyl-L-glutamate 5-semialdehyde + NAD(+) + H2O = N-succinyl-L-glutamate + NADH + 2 H(+). It functions in the pathway amino-acid degradation; L-arginine degradation via AST pathway; L-glutamate and succinate from L-arginine: step 4/5. Catalyzes the NAD-dependent reduction of succinylglutamate semialdehyde into succinylglutamate. The protein is N-succinylglutamate 5-semialdehyde dehydrogenase of Salmonella enteritidis PT4 (strain P125109).